The primary structure comprises 130 residues: Small ribosomal subunit protein uS8 (130 aa).

The protein belongs to the universal ribosomal protein uS8 family. As to quaternary structure, part of the 30S ribosomal subunit. Contacts proteins S5 and S12.

One of the primary rRNA binding proteins, it binds directly to 16S rRNA central domain where it helps coordinate assembly of the platform of the 30S subunit. The sequence is that of Small ribosomal subunit protein uS8 from Vibrio campbellii (strain ATCC BAA-1116).